We begin with the raw amino-acid sequence, 187 residues long: Bifunctional protein PyrR (187 aa).

Residues 109–121 (VILVDDVLYSGRS) carry the PRPP-binding motif.

It belongs to the purine/pyrimidine phosphoribosyltransferase family. PyrR subfamily.

The enzyme catalyses UMP + diphosphate = 5-phospho-alpha-D-ribose 1-diphosphate + uracil. Its function is as follows. Regulates the transcription of the pyrimidine nucleotide (pyr) operon in response to exogenous pyrimidines. Also displays a weak uracil phosphoribosyltransferase activity which is not physiologically significant. This Mycobacterium ulcerans (strain Agy99) protein is Bifunctional protein PyrR.